A 124-amino-acid chain; its full sequence is Prefoldin subunit beta (124 aa).

It belongs to the prefoldin subunit beta family. As to quaternary structure, heterohexamer of two alpha and four beta subunits.

Its subcellular location is the cytoplasm. Molecular chaperone capable of stabilizing a range of proteins. Seems to fulfill an ATP-independent, HSP70-like function in archaeal de novo protein folding. The polypeptide is Prefoldin subunit beta (pfdB) (Thermoplasma acidophilum (strain ATCC 25905 / DSM 1728 / JCM 9062 / NBRC 15155 / AMRC-C165)).